A 467-amino-acid polypeptide reads, in one-letter code: ATP-dependent protease ATPase subunit HslU (467 aa).

ATP is bound by residues isoleucine 18, 60–65, aspartate 280, glutamate 345, and arginine 417; that span reads GVGKTE.

It belongs to the ClpX chaperone family. HslU subfamily. In terms of assembly, a double ring-shaped homohexamer of HslV is capped on each side by a ring-shaped HslU homohexamer. The assembly of the HslU/HslV complex is dependent on binding of ATP.

It localises to the cytoplasm. In terms of biological role, ATPase subunit of a proteasome-like degradation complex; this subunit has chaperone activity. The binding of ATP and its subsequent hydrolysis by HslU are essential for unfolding of protein substrates subsequently hydrolyzed by HslV. HslU recognizes the N-terminal part of its protein substrates and unfolds these before they are guided to HslV for hydrolysis. In Lactobacillus helveticus (strain DPC 4571), this protein is ATP-dependent protease ATPase subunit HslU.